A 2959-amino-acid polypeptide reads, in one-letter code: uncharacterized protein (2959 aa).

It is found in the virion. This is an uncharacterized protein from Acanthamoeba polyphaga mimivirus (APMV).